We begin with the raw amino-acid sequence, 143 residues long: Cofilin (143 aa).

Residues 5–137 enclose the ADF-H domain; sequence GVAVADESLT…AYESVLEKVS (133 aa).

This sequence belongs to the actin-binding proteins ADF family.

Its subcellular location is the cytoplasm. The protein resides in the cytoskeleton. It localises to the nucleus matrix. In terms of biological role, controls reversibly actin polymerization and depolymerization in a pH-sensitive manner. It has the ability to bind G- and F-actin in a 1:1 ratio of cofilin to actin. Binding to F-actin is regulated by tropomyosin. It is the major component of intranuclear and cytoplasmic actin rods. Required for accumulation of actin at the cell division site via depolymerizing actin at the cell ends. In association with myosin II has a role in the assembly of the contractile ring via severing actin filaments. Involved in the maintenance of the contractile ring once formed. In association with profilin and capping protein, has a role in the mitotic reorganization of the actin cytoskeleton. This Eremothecium gossypii (strain ATCC 10895 / CBS 109.51 / FGSC 9923 / NRRL Y-1056) (Yeast) protein is Cofilin (COF1).